The sequence spans 697 residues: Serine/threonine-protein kinase tousled-like 2 (697 aa).

2 disordered regions span residues 27–136 and 289–315; these read KAPL…TAPV and LAKR…NKTN. The span at 31–44 shows a compositional bias: polar residues; it reads NSESSNQSLCSLGS. Basic and acidic residues predominate over residues 46–62; sequence SDKELEQTPEKKQNDQR. Residues 111–131 are compositionally biased toward low complexity; that stretch reads SSPQHSLSNPLPLPSQQCSPP. Coiled coils occupy residues 264-293 and 334-372; these read AFQN…AKRK and FKLR…IHNE. The Protein kinase domain maps to 387-666; the sequence is YLLLHLLGRG…VQQLACDPYL (280 aa). Residues 393–401 and Lys416 each bind ATP; that span reads LGRGGFSEV. Asp517 acts as the Proton acceptor in catalysis.

It belongs to the protein kinase superfamily. Ser/Thr protein kinase family. Monomer. May form homodimers; homodimerization may enhance autophosphoylation and enzymatic activity. Heterodimer with TLK1. It depends on Mg(2+) as a cofactor. In terms of processing, phosphorylated. Autophosphorylated; phosphorylation promotes the assembly of higher order oligomers and enzymatic activity.

It is found in the nucleus. The protein localises to the nucleoplasm. Its subcellular location is the cytoplasm. The protein resides in the perinuclear region. It localises to the cytoskeleton. The enzyme catalyses L-seryl-[protein] + ATP = O-phospho-L-seryl-[protein] + ADP + H(+). The catalysed reaction is L-threonyl-[protein] + ATP = O-phospho-L-threonyl-[protein] + ADP + H(+). Functionally, serine/threonine-protein kinase involved in the process of chromatin assembly and probably also DNA replication, transcription, repair, and chromosome segregation. Negative regulator of amino acid starvation-induced autophagy. The chain is Serine/threonine-protein kinase tousled-like 2 from Xenopus tropicalis (Western clawed frog).